A 32-amino-acid polypeptide reads, in one-letter code: Islet amyloid polypeptide (32 aa).

It belongs to the calcitonin family. As to quaternary structure, can form homodimers. Interacts with IDE and INS. Interaction with INS inhibits homodimerization and fibril formation.

It localises to the secreted. Functionally, amylin/IAPP is a glucoregulatory peptide hormone that plays an important role in the regulation of energy homeostasis. Selectively inhibits insulin-stimulated glucose utilization and glycogen deposition in muscle, while not affecting adipocyte glucose metabolism. IAPP function is mediated by the CALCR-RAMPs (AMYRs) receptor complexes. Amylin can also bind CALCR receptor in the absence of RAMPs, although it is more selective for AMYRs. This Saguinus oedipus (Cotton-top tamarin) protein is Islet amyloid polypeptide (IAPP).